A 358-amino-acid polypeptide reads, in one-letter code: 3-dehydroquinate synthase (358 aa).

NAD(+) is bound by residues 70–75 (DGEQFK), 104–108 (GVIGD), 128–129 (TT), Lys-141, Lys-150, and 168–171 (CLHT). Glu-183, His-246, and His-263 together coordinate Zn(2+).

This sequence belongs to the sugar phosphate cyclases superfamily. Dehydroquinate synthase family. Co(2+) is required as a cofactor. It depends on Zn(2+) as a cofactor. NAD(+) serves as cofactor.

The protein resides in the cytoplasm. The catalysed reaction is 7-phospho-2-dehydro-3-deoxy-D-arabino-heptonate = 3-dehydroquinate + phosphate. It participates in metabolic intermediate biosynthesis; chorismate biosynthesis; chorismate from D-erythrose 4-phosphate and phosphoenolpyruvate: step 2/7. Functionally, catalyzes the conversion of 3-deoxy-D-arabino-heptulosonate 7-phosphate (DAHP) to dehydroquinate (DHQ). The protein is 3-dehydroquinate synthase of Shewanella baltica (strain OS185).